The following is a 114-amino-acid chain: Tyrosine-protein phosphatase 11 (114 aa).

Positions 1–114 (WRMIWEHNTR…EAKHTGPTIV (114 aa)) constitute a Tyrosine-protein phosphatase domain. Asp-81 serves as a coordination point for substrate.

It belongs to the protein-tyrosine phosphatase family.

The enzyme catalyses O-phospho-L-tyrosyl-[protein] + H2O = L-tyrosyl-[protein] + phosphate. The protein is Tyrosine-protein phosphatase 11 (STY-11) of Styela plicata (Wrinkled sea squirt).